Consider the following 461-residue polypeptide: Glutamate-gated chloride channel alpha (461 aa).

An N-terminal signal peptide occupies residues 1 to 20 (MATWIVGKLIIASLILGIQA). At 21 to 275 (QQARTKSQDI…TTIQLKREFS (255 aa)) the chain is on the extracellular side. L-glutamate is bound by residues R98, R117, and S182. Cysteines 191 and 205 form a disulfide. S211 provides a ligand contact to L-glutamate. A glycan (N-linked (GlcNAc...) asparagine) is linked at N246. A disulfide bridge links C252 with C263. The chain crosses the membrane as a helical span at residues 276 to 298 (FYLLQLYIPSCMLVIVSWVSFWF). Residues 299-303 (DRTAI) lie on the Cytoplasmic side of the membrane. Residues 304 to 325 (PARVTLGVTTLLTMTAQSAGIN) form a helical membrane-spanning segment. Topologically, residues 326-332 (SQLPPVS) are extracellular. The chain crosses the membrane as a helical span at residues 333-353 (YIKAIDVWIGACMTFIFCALL). At 354-432 (EFALVNHIAN…EWNDISKRVD (79 aa)) the chain is on the cytoplasmic side. Residues 433-454 (LISRALFPVLFFVFNILYWSRF) form a helical membrane-spanning segment. Residues 455 to 461 (GQQNVLF) lie on the Extracellular side of the membrane.

This sequence belongs to the ligand-gated ion channel (TC 1.A.9) family. Glutamate-gated chloride channel (TC 1.A.9.4) subfamily. Pentamer. Homooligomer, forms functional heterooligomers with glc-2.

The protein localises to the postsynaptic cell membrane. It is found in the cell membrane. Its function is as follows. Glutamate-gated chloride channel subunit; channel properties depend on the subunit composition. Glutamate binding triggers a rapidly reversible current in heteromeric channels formed by glc-1 and glc-2, while the anti-helmintic drug ivermectin and other avermectins trigger a permanently open channel configuration. Channels containing only glc-1 are activated by ivermectin, but not by glutamate alone (in vitro). The heteromeric channel formed by glc-1 and glc-2 is also activated by ibotenate, and it is blocked by picrotoxin and flufenamic acid. Plays a role in the regulation of locomotor behavior. The sequence is that of Glutamate-gated chloride channel alpha from Caenorhabditis elegans.